Consider the following 332-residue polypeptide: Ferredoxin--NADP reductase (332 aa).

FAD is bound by residues Asp33, Gln41, Tyr46, Ala86, Met121, Asp282, and Ser325.

The protein belongs to the ferredoxin--NADP reductase type 2 family. Homodimer. FAD is required as a cofactor.

The enzyme catalyses 2 reduced [2Fe-2S]-[ferredoxin] + NADP(+) + H(+) = 2 oxidized [2Fe-2S]-[ferredoxin] + NADPH. In Sulfurisphaera tokodaii (strain DSM 16993 / JCM 10545 / NBRC 100140 / 7) (Sulfolobus tokodaii), this protein is Ferredoxin--NADP reductase.